Consider the following 340-residue polypeptide: Tryptophan--tRNA ligase (340 aa).

ATP contacts are provided by residues 11–13 (RPT) and 19–20 (GH). Residues 12 to 20 (PTGKLHLGH) carry the 'HIGH' region motif. Residue aspartate 140 coordinates L-tryptophan. ATP-binding positions include 152 to 154 (GND), leucine 194, and 202 to 206 (KMSKS). Positions 202–206 (KMSKS) match the 'KMSKS' region motif.

It belongs to the class-I aminoacyl-tRNA synthetase family. Homodimer.

Its subcellular location is the cytoplasm. It catalyses the reaction tRNA(Trp) + L-tryptophan + ATP = L-tryptophyl-tRNA(Trp) + AMP + diphosphate + H(+). In terms of biological role, catalyzes the attachment of tryptophan to tRNA(Trp). This is Tryptophan--tRNA ligase from Streptococcus pyogenes serotype M3 (strain ATCC BAA-595 / MGAS315).